A 795-amino-acid polypeptide reads, in one-letter code: ATP-dependent RNA helicase DRS1 (795 aa).

Disordered stretches follow at residues Met1 to Gly127 and Glu162 to Ser276. Residues Asp21 to Thr34 show a composition bias toward acidic residues. Over residues Lys56 to Gly70 the composition is skewed to basic residues. 5 stretches are compositionally biased toward acidic residues: residues Asp78–Val90, Asp98–Phe108, Val172–Ala195, Glu204–Ser225, and Glu240–Glu252. Positions Ser276 to Ala304 match the Q motif motif. Residues Ile307–Ile481 form the Helicase ATP-binding domain. Ala320–Thr327 is a binding site for ATP. The DEAD box motif lies at Asp429–Asp432. Residues Thr466–Gln684 enclose the Helicase C-terminal domain. Positions Lys703–Arg795 are disordered. 2 stretches are compositionally biased toward basic and acidic residues: residues Gln710 to Arg721 and Ser740 to Ser756. A compositionally biased stretch (basic residues) spans Lys779–Arg795.

It belongs to the DEAD box helicase family. DDX27/DRS1 subfamily. In terms of assembly, associates with pre-ribosomal particles.

It localises to the nucleus. It is found in the nucleolus. It carries out the reaction ATP + H2O = ADP + phosphate + H(+). In terms of biological role, ATP-binding RNA helicase involved in ribosome assembly. This chain is ATP-dependent RNA helicase DRS1 (DRS1), found in Chaetomium globosum (strain ATCC 6205 / CBS 148.51 / DSM 1962 / NBRC 6347 / NRRL 1970) (Soil fungus).